Reading from the N-terminus, the 501-residue chain is MELHNDEKRLLKAFQESNEKIMNLEELSKYIEKEKVMRAAFWLSGRDFLEIIENKTKICELTELGNQSLDLGIPERKVANYIKENNLESIPIKDLSKILEKDETGAALGNLKKKGLVAIDKGNIVFKDLDYVDIEEEVLKKASEDFNLSNYSEDEVKIIENLKKRGFLKINEVVDRSFELKNAGIDFIKKPIEIKEEITQLTREMIVSGKWNDYFIRPYDAKIPTEELYPAKAHPMSKIIQEVNEVLISMGFKEVKSQIVQTEFWNFDTLFEPQDHPARDMQDTFFVKYPNTGTVPKDLLEKVKGIHECGTIGDEKISKGWCYNFDENVSERTVLRTHTTVSSIKYLASLSECERENAQKVFCIDRVFRNEAIDYKHLPEFYQCEGIVMAEDVNFDNLVGILKEFLQKLGFEKVRIRPAYFPFTEPSLEAEVYMEGKGWLELLGAGIFRPEVLEPFGIKKPVLAWGIGLSRLAMLRLGLTDIRELHKNDMQWLKKTVISEE.

The L-phenylalanine site is built by Thr-340 and Phe-423. Mg(2+) is bound at residue Glu-425. Phe-448 is an L-phenylalanine binding site.

It belongs to the class-II aminoacyl-tRNA synthetase family. Phe-tRNA synthetase alpha subunit type 2 subfamily. As to quaternary structure, tetramer of two alpha and two beta subunits. Requires Mg(2+) as cofactor.

It localises to the cytoplasm. The catalysed reaction is tRNA(Phe) + L-phenylalanine + ATP = L-phenylalanyl-tRNA(Phe) + AMP + diphosphate + H(+). In Methanococcus maripaludis (strain C5 / ATCC BAA-1333), this protein is Phenylalanine--tRNA ligase alpha subunit.